Consider the following 192-residue polypeptide: UPF0149 protein VP2588 (192 aa).

Belongs to the UPF0149 family.

This is UPF0149 protein VP2588 from Vibrio parahaemolyticus serotype O3:K6 (strain RIMD 2210633).